A 475-amino-acid polypeptide reads, in one-letter code: Probable phenylalanine--tRNA ligase alpha subunit (475 aa).

A contains the major tRNA-Phe binding sites region spans residues 2 to 151; the sequence is TAVAQKIIEN…KRKLVSRRKK (150 aa). L-phenylalanine-binding positions include Thr-309, 351–353, and Tyr-391; that span reads QVE. Glu-393 contributes to the Mg(2+) binding site. Phe-417 serves as a coordination point for L-phenylalanine.

Belongs to the class-II aminoacyl-tRNA synthetase family. Phe-tRNA synthetase alpha subunit type 2 subfamily. As to quaternary structure, tetramer of two alpha and two beta subunits. Mg(2+) is required as a cofactor.

It is found in the cytoplasm. It carries out the reaction tRNA(Phe) + L-phenylalanine + ATP = L-phenylalanyl-tRNA(Phe) + AMP + diphosphate + H(+). The protein is Probable phenylalanine--tRNA ligase alpha subunit of Encephalitozoon cuniculi (strain GB-M1) (Microsporidian parasite).